The sequence spans 650 residues: Hemocyanin subunit 2 (650 aa).

Residues serine 120 and serine 172 are each glycosylated (O-linked (GalNAc...) serine). The Cu cation site is built by histidine 193, histidine 197, and histidine 225. An N-linked (GlcNAc...) asparagine glycan is attached at asparagine 309. Residues histidine 344, histidine 348, and histidine 384 each contribute to the Cu cation site.

Belongs to the tyrosinase family. Hemocyanin subfamily. As to quaternary structure, hexamer of a number of different chains, of which five have been identified. Post-translationally, contains one N-glycosylated and three O-glycosylated residues. The position of one of the O-glycosylated residues has not been determined. O-linked glycan at Ser-120 may be composed of two GalNAc, three Gal, and two N-acetylneuraminic acid units for a total 1525-Da MW. Hemolymph.

It is found in the secreted. The protein resides in the extracellular space. Functionally, hemocyanins are copper-containing oxygen carriers occurring freely dissolved in the hemolymph of many mollusks and arthropods. This chain is Hemocyanin subunit 2, found in Carcinus aestuarii (Green crab).